Here is a 207-residue protein sequence, read N- to C-terminus: N-(5'-phosphoribosyl)anthranilate isomerase (207 aa).

The protein belongs to the TrpF family.

It carries out the reaction N-(5-phospho-beta-D-ribosyl)anthranilate = 1-(2-carboxyphenylamino)-1-deoxy-D-ribulose 5-phosphate. It functions in the pathway amino-acid biosynthesis; L-tryptophan biosynthesis; L-tryptophan from chorismate: step 3/5. This is N-(5'-phosphoribosyl)anthranilate isomerase from Legionella pneumophila subsp. pneumophila (strain Philadelphia 1 / ATCC 33152 / DSM 7513).